The primary structure comprises 585 residues: ATP-dependent lipid A-core flippase (585 aa).

6 consecutive transmembrane segments (helical) span residues L23–I43, I64–T84, A140–Y160, W163–V183, I247–I267, and F273–L293. Positions V27 to K308 constitute an ABC transmembrane type-1 domain. Residues L340 to L576 enclose the ABC transporter domain. G374 to S381 contacts ATP.

The protein belongs to the ABC transporter superfamily. Lipid exporter (TC 3.A.1.106) family. In terms of assembly, homodimer.

Its subcellular location is the cell inner membrane. The enzyme catalyses ATP + H2O + lipid A-core oligosaccharideSide 1 = ADP + phosphate + lipid A-core oligosaccharideSide 2.. Involved in lipopolysaccharide (LPS) biosynthesis. Translocates lipid A-core from the inner to the outer leaflet of the inner membrane. Transmembrane domains (TMD) form a pore in the inner membrane and the ATP-binding domain (NBD) is responsible for energy generation. This Pseudoalteromonas atlantica (strain T6c / ATCC BAA-1087) protein is ATP-dependent lipid A-core flippase.